A 133-amino-acid polypeptide reads, in one-letter code: Meiotically up-regulated gene 15 protein (133 aa).

It is found in the cytoplasm. The protein resides in the nucleus. Has a role in meiosis. The protein is Meiotically up-regulated gene 15 protein (mug15) of Schizosaccharomyces pombe (strain 972 / ATCC 24843) (Fission yeast).